The sequence spans 271 residues: Sec-independent protein translocase protein TatC (271 aa).

The next 5 helical transmembrane spans lie at 24 to 44 (ISVG…EQIF), 78 to 98 (FFAG…LFIA), 112 to 132 (FLFV…YFVF), 159 to 179 (LVIK…GLLL), and 215 to 235 (FTQV…IFFG). The interval 247–271 (AAEEAQWAADHNVDDDDVDHPEHKA) is disordered.

It belongs to the TatC family. The Tat system comprises two distinct complexes: a TatABC complex, containing multiple copies of TatA, TatB and TatC subunits, and a separate TatA complex, containing only TatA subunits. Substrates initially bind to the TatABC complex, which probably triggers association of the separate TatA complex to form the active translocon.

It localises to the cell inner membrane. Its function is as follows. Part of the twin-arginine translocation (Tat) system that transports large folded proteins containing a characteristic twin-arginine motif in their signal peptide across membranes. Together with TatB, TatC is part of a receptor directly interacting with Tat signal peptides. This Magnetococcus marinus (strain ATCC BAA-1437 / JCM 17883 / MC-1) protein is Sec-independent protein translocase protein TatC.